We begin with the raw amino-acid sequence, 563 residues long: Src substrate protein p85 (563 aa).

Cortactin repeat units follow at residues 89–125, 126–162, 163–199, 200–236, 237–273, and 274–310; these read ASHG…SQVD, SVKG…SQKD, YSSG…SQKD, YSKG…SQKD, YVKG…SQKD, and YKSG…SQQD. One copy of the Cortactin 7; truncated repeat lies at 311–333; sequence YSKGFGGKYGVQKDRMDKNAATF. Residues 331-477 are disordered; that stretch reads ATFEDIEKPT…EAVSQREAEY (147 aa). Residues 349–410 adopt a coiled-coil conformation; sequence VERVANKTSS…EEQAKAKKQT (62 aa). A compositionally biased stretch (basic and acidic residues) spans 366-405; sequence LAKEKEQEDRRKAEAERAQRMAREKQEQEEARRKLEEQAK. The 59-residue stretch at 505–563 folds into the SH3 domain; that stretch reads ELGITAIALYDYQAAGDDEISFDPDDIITNIEMIDDGWWRGVCKGRYGLFPANYVELRQ.

Post-translationally, acetylated. In terms of processing, in normal cells, appears to be phosphorylated on serine and threonine; in cells expressing activated forms of pp60-src, they become heavily phosphorylated on tyrosine in vitro. Tyrosine phosphorylation in transformed cells may contribute to cellular growth regulation and transformation.

It localises to the cytoplasm. It is found in the cytoskeleton. The protein resides in the cell projection. Its subcellular location is the lamellipodium. The protein localises to the ruffle. It localises to the dendrite. It is found in the cell membrane. The protein resides in the podosome. Its subcellular location is the cell junction. The protein localises to the focal adhesion. It localises to the membrane. It is found in the clathrin-coated pit. The protein resides in the dendritic spine. Its subcellular location is the cell cortex. The protein localises to the endoplasmic reticulum. Its function is as follows. Contributes to the organization of the actin cytoskeleton and cell shape. Plays a role in the formation of lamellipodia and in cell migration. Plays a role in the regulation of neuron morphology, axon growth and formation of neuronal growth cones, and may play a role in the regulation of neuronal spine density. Plays a role in focal adhesion assembly and turnover. Plays a role in intracellular protein transport and endocytosis, and in modulating the levels of potassium channels present at the cell membrane. Plays a role in endocytosis via clathrin-coated pits. This is Src substrate protein p85 (CTTN1) from Gallus gallus (Chicken).